A 354-amino-acid polypeptide reads, in one-letter code: uncharacterized protein (354 aa).

Belongs to the asfivirus B354L family.

This is an uncharacterized protein from African swine fever virus (isolate Tick/South Africa/Pretoriuskop Pr4/1996) (ASFV).